The chain runs to 413 residues: Tyrosine--tRNA ligase (413 aa).

Y34 is a binding site for L-tyrosine. The 'HIGH' region motif lies at 39-48 (CTAQSLHVGN). 2 residues coordinate L-tyrosine: Y171 and Q175. Residues 231-235 (KMGKT) carry the 'KMSKS' region motif. Residue K234 coordinates ATP. The S4 RNA-binding domain maps to 346-411 (IPITELLVTI…GKKCHILVKI (66 aa)).

This sequence belongs to the class-I aminoacyl-tRNA synthetase family. TyrS type 1 subfamily. As to quaternary structure, homodimer.

The protein resides in the cytoplasm. It carries out the reaction tRNA(Tyr) + L-tyrosine + ATP = L-tyrosyl-tRNA(Tyr) + AMP + diphosphate + H(+). Catalyzes the attachment of tyrosine to tRNA(Tyr) in a two-step reaction: tyrosine is first activated by ATP to form Tyr-AMP and then transferred to the acceptor end of tRNA(Tyr). This chain is Tyrosine--tRNA ligase, found in Orientia tsutsugamushi (strain Ikeda) (Rickettsia tsutsugamushi).